The primary structure comprises 384 residues: S-adenosylmethionine synthase (384 aa).

H15 serves as a coordination point for ATP. D17 contacts Mg(2+). E43 provides a ligand contact to K(+). 2 residues coordinate L-methionine: E56 and Q99. Positions 99–109 (QSPDINQGVDK) are flexible loop. ATP contacts are provided by residues 164 to 166 (DAK), 230 to 231 (RF), D239, 245 to 246 (RK), A262, and K266. Residue D239 coordinates L-methionine. Residue K270 participates in L-methionine binding.

Belongs to the AdoMet synthase family. In terms of assembly, homotetramer; dimer of dimers. Mg(2+) is required as a cofactor. The cofactor is K(+).

The protein localises to the cytoplasm. It catalyses the reaction L-methionine + ATP + H2O = S-adenosyl-L-methionine + phosphate + diphosphate. The protein operates within amino-acid biosynthesis; S-adenosyl-L-methionine biosynthesis; S-adenosyl-L-methionine from L-methionine: step 1/1. Catalyzes the formation of S-adenosylmethionine (AdoMet) from methionine and ATP. The overall synthetic reaction is composed of two sequential steps, AdoMet formation and the subsequent tripolyphosphate hydrolysis which occurs prior to release of AdoMet from the enzyme. This chain is S-adenosylmethionine synthase, found in Vibrio parahaemolyticus serotype O3:K6 (strain RIMD 2210633).